A 205-amino-acid chain; its full sequence is Methylthioribulose-1-phosphate dehydratase (205 aa).

Residues His-96 and His-98 each coordinate Zn(2+).

This sequence belongs to the aldolase class II family. MtnB subfamily. It depends on Zn(2+) as a cofactor.

It carries out the reaction 5-(methylsulfanyl)-D-ribulose 1-phosphate = 5-methylsulfanyl-2,3-dioxopentyl phosphate + H2O. Its pathway is amino-acid biosynthesis; L-methionine biosynthesis via salvage pathway; L-methionine from S-methyl-5-thio-alpha-D-ribose 1-phosphate: step 2/6. Functionally, catalyzes the dehydration of methylthioribulose-1-phosphate (MTRu-1-P) into 2,3-diketo-5-methylthiopentyl-1-phosphate (DK-MTP-1-P). The chain is Methylthioribulose-1-phosphate dehydratase from Exiguobacterium sp. (strain ATCC BAA-1283 / AT1b).